The following is a 91-amino-acid chain: UPF0335 protein BRADO1188 (91 aa).

This sequence belongs to the UPF0335 family.

This chain is UPF0335 protein BRADO1188, found in Bradyrhizobium sp. (strain ORS 278).